A 120-amino-acid chain; its full sequence is uncharacterized protein (120 aa).

Its subcellular location is the mitochondrion. This is an uncharacterized protein from Arabidopsis thaliana (Mouse-ear cress).